The primary structure comprises 395 residues: Dihydrolipoyllysine-residue succinyltransferase component of 2-oxoglutarate dehydrogenase complex (395 aa).

One can recognise a Lipoyl-binding domain in the interval Arg2 to Asn77. An N6-lipoyllysine modification is found at Lys43. A Peripheral subunit-binding (PSBD) domain is found at Thr111–Ile148. Catalysis depends on residues His366 and Asp370.

It belongs to the 2-oxoacid dehydrogenase family. In terms of assembly, forms a 24-polypeptide structural core with octahedral symmetry. Part of the 2-oxoglutarate dehydrogenase (OGDH) complex composed of E1 (2-oxoglutarate dehydrogenase), E2 (dihydrolipoamide succinyltransferase) and E3 (dihydrolipoamide dehydrogenase); the complex contains multiple copies of the three enzymatic components (E1, E2 and E3). It depends on (R)-lipoate as a cofactor.

The catalysed reaction is N(6)-[(R)-dihydrolipoyl]-L-lysyl-[protein] + succinyl-CoA = N(6)-[(R)-S(8)-succinyldihydrolipoyl]-L-lysyl-[protein] + CoA. It functions in the pathway amino-acid degradation; L-lysine degradation via saccharopine pathway; glutaryl-CoA from L-lysine: step 6/6. Functionally, E2 component of the 2-oxoglutarate dehydrogenase (OGDH) complex which catalyzes the second step in the conversion of 2-oxoglutarate to succinyl-CoA and CO(2). This Rickettsia conorii (strain ATCC VR-613 / Malish 7) protein is Dihydrolipoyllysine-residue succinyltransferase component of 2-oxoglutarate dehydrogenase complex (sucB).